We begin with the raw amino-acid sequence, 294 residues long: uncharacterized protein (294 aa).

The first 16 residues, 1–16, serve as a signal peptide directing secretion; sequence MQNFMVLLLLIVAVVA. N-linked (GlcNAc...) asparagine; by host glycans are attached at residues asparagine 25 and asparagine 162.

This is an uncharacterized protein from Acheta domesticus (House cricket).